We begin with the raw amino-acid sequence, 507 residues long: Maturase K (507 aa).

It belongs to the intron maturase 2 family. MatK subfamily.

The protein resides in the plastid. Its subcellular location is the chloroplast. In terms of biological role, usually encoded in the trnK tRNA gene intron. Probably assists in splicing its own and other chloroplast group II introns. The protein is Maturase K of Calocedrus decurrens (California incense-cedar).